The sequence spans 396 residues: Anticodon nuclease (396 aa).

Its function is as follows. Anticodon endonuclease (ACNase) that triggers the cleavage ligation of tRNA(Lys). It is activated by T4 stp protein and masked by the prrD protein (the endonuclease subunit of EcoprrI). The prr locus restricts phage T4 mutants lacking polynucleotide kinase or RNA ligase; T4 mutants lacking these genes manifest a T4-induced anticodon nuclease (ACNase). It is thought that Stp and other T4-encoded ACNase factors counteract the masking agents, thus activating the latent ACNase. The sequence is that of Anticodon nuclease from Escherichia coli.